The following is a 499-amino-acid chain: Ammonium transporter MEP2 (499 aa).

The Extracellular segment spans residues 1 to 31; the sequence is MSYNFTGTPTGEGTGGNSLTTDLNTQFDLAN. N4 carries an N-linked (GlcNAc...) asparagine glycan. A helical membrane pass occupies residues 32–52; it reads MGWIGVASAGVWIMVPGIGLL. Topologically, residues 53–62 are cytoplasmic; it reads YSGLSRKKHA. A helical transmembrane segment spans residues 63–83; sequence LSLLWASMMASAVCIFQWFFW. The Extracellular segment spans residues 84-122; it reads GYSLAFSHNTRGNGFIGTLEFFGFRNVLGAPSSVSSLPD. Residues 123-143 form a helical membrane-spanning segment; it reads ILFAVYQGMFAAVTGALMLGG. The Cytoplasmic portion of the chain corresponds to 144-152; it reads ACERARLFP. The chain crosses the membrane as a helical span at residues 153 to 173; that stretch reads MMVFLFLWMTIVYCPIACWVW. The Extracellular portion of the chain corresponds to 174 to 187; sequence NAEGWLVKLGSLDY. Residues 188–208 traverse the membrane as a helical segment; sequence AGGLCVHLTSGHGGLVYALIL. The Cytoplasmic segment spans residues 209–230; that stretch reads GKRNDPVTRKGMPKYKPHSVTS. A helical membrane pass occupies residues 231–251; that stretch reads VVLGTVFLWFGWMFFNGGSAG. Over 252–257 the chain is Extracellular; sequence NATIRA. A helical membrane pass occupies residues 258-278; it reads WYSIMSTNLAAACGGLTWMVI. At 279 to 289 the chain is on the cytoplasmic side; the sequence is DYFRCGRKWTT. The helical transmembrane segment at 290–312 threads the bilayer; it reads VGLCSGIIAGLVGITPAAGFVPI. Over 313 to 315 the chain is Extracellular; the sequence is WSA. The helical transmembrane segment at 316 to 338 threads the bilayer; the sequence is VVIGVVTGAGCNLAVDLKSLLRI. Topologically, residues 339-346 are cytoplasmic; it reads DDGLDCYS. The chain crosses the membrane as a helical span at residues 347 to 367; sequence IHGVGGCIGSVLTGIFAADYV. At 368-393 the chain is on the extracellular side; it reads NATAGSYISPIDGGWINHHYKQVGYQ. The helical transmembrane segment at 394 to 414 threads the bilayer; that stretch reads LAGICAALAWTVTVTSILLLT. The Cytoplasmic segment spans residues 415 to 499; that stretch reads MNAIPFLKLR…SSTKNTDHIV (85 aa). The tract at residues 428 to 441 is enhancer domain; sequence DEEELGTDAAQIGE. The tract at residues 442–449 is linker domain; the sequence is FTYEESTA. The interval 450–485 is autoinhibitory domain; that stretch reads YIPEPIRSKTSAQMPPPHENIDDKIVGNTDAEKNST. The interval 455–499 is disordered; that stretch reads IRSKTSAQMPPPHENIDDKIVGNTDAEKNSTPSDASSTKNTDHIV. S457 carries the phosphoserine modification. Over residues 468–482 the composition is skewed to basic and acidic residues; sequence ENIDDKIVGNTDAEK. Residues 483 to 493 show a composition bias toward polar residues; the sequence is NSTPSDASSTK.

This sequence belongs to the ammonia transporter channel (TC 1.A.11.2) family. In terms of processing, phosphorylated at Ser-457 by the TORC1 effector kinase NPR1 under nitrogen-limiting conditions which causes a conformational change in the C-terminal region (CTR) to form an open active conformation. Supplementation of nitrogen source leads to inactivation and instant Ser-457 dephosphorylation via plasma membrane PSR1 and PSR2 redundant phosphatases. Post-translationally, the residue Asn-4 of the protein's N-terminal tail is the only site that is glycosylated.

It localises to the cell membrane. In terms of biological role, transporter for ammonium (both charged and uncharged NH3 and NH4) to use as a nitrogen source. The affinity of MEP2 is about twenty times higher than that of MEP1. MEP3 has the lowest affinity. Under ammonium limitation acts as an ammonium sensor, generating a signal that leads to pseudohyphal (filamentous) growth. The polypeptide is Ammonium transporter MEP2 (Saccharomyces cerevisiae (strain ATCC 204508 / S288c) (Baker's yeast)).